We begin with the raw amino-acid sequence, 420 residues long: Type II methyltransferase M.NmeDI (420 aa).

Residues 1 to 23 (MMSLKIQPAVPKKSDKPSATNRD) are disordered. One can recognise an SAM-dependent MTase C5-type domain in the interval 56 to 411 (TLIFSFFSGA…MTLKSYLENH (356 aa)). Cys-148 is a catalytic residue.

It belongs to the class I-like SAM-binding methyltransferase superfamily. C5-methyltransferase family.

The enzyme catalyses a 2'-deoxycytidine in DNA + S-adenosyl-L-methionine = a 5-methyl-2'-deoxycytidine in DNA + S-adenosyl-L-homocysteine + H(+). Functionally, a methylase that recognizes the double-stranded sequence 5'-RCCGGB-3', methylates C-2 on both strands, and protects the DNA from cleavage by the NmeDI endonuclease. The polypeptide is Type II methyltransferase M.NmeDI (nmeDIMP) (Neisseria meningitidis serogroup C).